A 1001-amino-acid polypeptide reads, in one-letter code: Ribonuclease E/G-like protein, chloroplastic (1001 aa).

The transit peptide at 1-48 directs the protein to the chloroplast; sequence MDVTEVPWRRLPQFSVSSRASWLVSSGFPLSSYMFSHVERGKTFRLTL. Residues 76-185 enclose the CBM20 domain; sequence SRLKGLCEVV…KIIIRDSWMS (110 aa). Asp-755 contacts Mg(2+). Positions 769 to 789 form a coiled coil; sequence QEKAILEVNLAAARQIAREIR. Residue Asp-800 coordinates Mg(2+). Residues Cys-858 and Cys-861 each coordinate Zn(2+).

Belongs to the RNase E/G family. Part of a chloroplastic degradosome-like complex. Interacts with RHON1. A homotetramer formed by a dimer of dimers. The cofactor is Mg(2+). Zn(2+) is required as a cofactor. In terms of tissue distribution, expressed in cotyledons, rosette and cauline leaves.

It is found in the plastid. The protein resides in the chloroplast stroma. Functionally, involved in intercistronic processing of primary transcripts from chloroplast operons. The endonucleolytic activity of the enzyme depends on the number of phosphates at the 5' end, is inhibited by structured RNA, and preferentially cleaves A/U-rich sequences. This Arabidopsis thaliana (Mouse-ear cress) protein is Ribonuclease E/G-like protein, chloroplastic (RNE).